Reading from the N-terminus, the 1035-residue chain is Beta-galactosidase (1035 aa).

Substrate is bound by residues Asn-101 and Asp-199. Asp-199 lines the Na(+) pocket. Mg(2+)-binding residues include Glu-415, His-417, and Glu-460. Residues Glu-460 and 540 to 543 (EYAH) each bind substrate. Glu-460 (proton donor) is an active-site residue. Catalysis depends on Glu-540, which acts as the Nucleophile. Asn-600 is a binding site for Mg(2+). Na(+) is bound by residues Phe-604 and Asn-607. Positions 607 and 1011 each coordinate substrate.

Belongs to the glycosyl hydrolase 2 family. As to quaternary structure, homotetramer. Requires Mg(2+) as cofactor. It depends on Na(+) as a cofactor.

It carries out the reaction Hydrolysis of terminal non-reducing beta-D-galactose residues in beta-D-galactosides.. This chain is Beta-galactosidase, found in Psychromonas ingrahamii (strain DSM 17664 / CCUG 51855 / 37).